The following is a 185-amino-acid chain: MVKDVISSMNVHMDKSIESLRKEYQKVRTGRASTSLLDDIKVDSYGTLSPLNQVATLAIPEARTITISPWDSKMIAPIEKAIMNSNLGLNPANDGKMIRLTLPPLTEERRKDIVKQLKRDAEDAKVALRNIRRDAIDQLKKLEKDKSISEDEQKRAEKEVQDFTNSHVAKVDEVLLHKEKEVMEV.

This sequence belongs to the RRF family.

The protein localises to the cytoplasm. In terms of biological role, responsible for the release of ribosomes from messenger RNA at the termination of protein biosynthesis. May increase the efficiency of translation by recycling ribosomes from one round of translation to another. The protein is Ribosome-recycling factor of Citrifermentans bemidjiense (strain ATCC BAA-1014 / DSM 16622 / JCM 12645 / Bem) (Geobacter bemidjiensis).